Reading from the N-terminus, the 150-residue chain is MGRFIFLSSGLLVVFLSLSGTGADQGCLPDWTLYEGYCYKVFKEKKTWADAEKFCKEQANGGHLVSLQSSEEVDFMVHQTFPILRYDFVWIGLSDFSRDCQWKWSDYSKLFYKAWNNEPNCFVCKTTDNQWLRRDCNRQQYFVCKSRVPR.

A signal peptide spans 1-23 (MGRFIFLSSGLLVVFLSLSGTGA). Intrachain disulfides connect cysteine 27/cysteine 38, cysteine 55/cysteine 144, and cysteine 121/cysteine 136. One can recognise a C-type lectin domain in the interval 34–145 (YEGYCYKVFK…CNRQQYFVCK (112 aa)).

Belongs to the snaclec family. In terms of assembly, heterodimer; disulfide-linked. As to expression, expressed by the venom gland.

The protein localises to the secreted. In terms of biological role, antagonist of the alpha-2 subunit of the integrin alpha-2/beta-1 (ITGA2/ITGB1) on human platelets and endothelial cells. This protein inhibits collagen-stimulated activation of human platelets in a dose-dependent manner. In addition, it antagonizes the binding of monoclonal antibodies against the alpha-2 subunit of integrin alpha-2/beta-1 to platelets and it coimmunoprecipitates with this integrin. The chain is Snaclec rhinocetin subunit beta from Bitis rhinoceros (West African gaboon viper).